The following is a 122-amino-acid chain: Large ribosomal subunit protein uL24 (122 aa).

A disordered region spans residues 43–64 (IRKHHRRDMPTPQGGTTKGGII).

It belongs to the universal ribosomal protein uL24 family. As to quaternary structure, part of the 50S ribosomal subunit.

One of two assembly initiator proteins, it binds directly to the 5'-end of the 23S rRNA, where it nucleates assembly of the 50S subunit. Its function is as follows. One of the proteins that surrounds the polypeptide exit tunnel on the outside of the subunit. This Cutibacterium acnes (strain DSM 16379 / KPA171202) (Propionibacterium acnes) protein is Large ribosomal subunit protein uL24.